The chain runs to 154 residues: Endoribonuclease YbeY (154 aa).

His114, His118, and His124 together coordinate Zn(2+).

This sequence belongs to the endoribonuclease YbeY family. The cofactor is Zn(2+).

It is found in the cytoplasm. Functionally, single strand-specific metallo-endoribonuclease involved in late-stage 70S ribosome quality control and in maturation of the 3' terminus of the 16S rRNA. In Histophilus somni (strain 129Pt) (Haemophilus somnus), this protein is Endoribonuclease YbeY.